The chain runs to 998 residues: Ephrin type-B receptor 3 (998 aa).

The first 33 residues, 1 to 33 (MARARPPPPPSPPPGLLPLLPPLLLLPLLLLPA), serve as a signal peptide directing secretion. Residues 34–559 (GCRALEETLM…AQQLQEQLPL (526 aa)) lie on the Extracellular side of the membrane. Residues 39–217 (EETLMDTKWV…FYKKCASTTA (179 aa)) form the Eph LBD domain. An intrachain disulfide couples cysteine 81 to cysteine 199. Fibronectin type-III domains are found at residues 339-451 (VPSP…TNQA) and 452-545 (APSE…TTSE). N-linked (GlcNAc...) asparagine glycans are attached at residues asparagine 351 and asparagine 445. A helical transmembrane segment spans residues 560-580 (IVGSATAGLVFVVAVVVIAIV). Over 581–998 (CLRKQRHGSD…QMNQTLPVQV (418 aa)) the chain is Cytoplasmic. Tyrosine 614 carries the phosphotyrosine; by autocatalysis modification. The region spanning 633–896 (VKIEEVIGAG…QIVNTLDKLI (264 aa)) is the Protein kinase domain. Residues 639 to 647 (IGAGEFGEV) and lysine 665 each bind ATP. The Proton acceptor role is filled by aspartate 758. One can recognise an SAM domain in the interval 925 to 989 (TTFTTVGDWL…LSSIQDMRLQ (65 aa)). The PDZ-binding signature appears at 996-998 (VQV).

This sequence belongs to the protein kinase superfamily. Tyr protein kinase family. Ephrin receptor subfamily. As to quaternary structure, heterotetramer upon binding of the ligand. The heterotetramer is composed of an ephrin dimer and a receptor dimer. Oligomerization is probably required to induce biological responses. In terms of processing, phosphorylated. Autophosphorylates upon ligand-binding. Autophosphorylation on Tyr-614 is required for interaction with SH2 domain-containing proteins. Ubiquitinated by RNF186, mainly through 'Lys-48' and 'Lys-63'-linked polyubiquitin chains. As to expression, ubiquitous.

It localises to the cell membrane. It is found in the cell projection. Its subcellular location is the dendrite. It carries out the reaction L-tyrosyl-[protein] + ATP = O-phospho-L-tyrosyl-[protein] + ADP + H(+). Receptor tyrosine kinase which binds promiscuously transmembrane ephrin-B family ligands residing on adjacent cells, leading to contact-dependent bidirectional signaling into neighboring cells. The signaling pathway downstream of the receptor is referred to as forward signaling while the signaling pathway downstream of the ephrin ligand is referred to as reverse signaling. Generally has an overlapping and redundant function with EPHB2. Like EPHB2, functions in axon guidance during development regulating for instance the neurons forming the corpus callosum and the anterior commissure, 2 major interhemispheric connections between the temporal lobes of the cerebral cortex. In addition to its role in axon guidance also plays an important redundant role with other ephrin-B receptors in development and maturation of dendritic spines and the formation of excitatory synapses. Controls other aspects of development through regulation of cell migration and positioning. This includes angiogenesis, palate development and thymic epithelium development for instance. Forward and reverse signaling through the EFNB2/EPHB3 complex also regulate migration and adhesion of cells that tubularize the urethra and septate the cloaca. Finally, plays an important role in intestinal epithelium differentiation segregating progenitor from differentiated cells in the crypt. The sequence is that of Ephrin type-B receptor 3 (EPHB3) from Homo sapiens (Human).